Here is a 132-residue protein sequence, read N- to C-terminus: T-cell receptor alpha chain V region CTL-F3 (132 aa).

Residues 1 to 22 (MNMRPDTCSVLVLLLMLRRNNG) form the signal peptide. The interval 23 to 114 (DSVTQTEGLV…DSALYYCALS (92 aa)) is v segment. N-linked (GlcNAc...) asparagine glycosylation occurs at asparagine 43. An intrachain disulfide couples cysteine 44 to cysteine 111. Residues 115–132 (NAGAKLTFGGGTRLTVRP) form a j segment region.

In Mus musculus (Mouse), this protein is T-cell receptor alpha chain V region CTL-F3.